Here is a 78-residue protein sequence, read N- to C-terminus: Short neurotoxin OH-46 (78 aa).

Positions 1–21 are cleaved as a signal peptide; the sequence is MKNLLLTFLVVTIVCLDLGYT. 4 disulfides stabilise this stretch: Cys24–Cys40, Cys33–Cys58, Cys62–Cys70, and Cys71–Cys76.

The protein belongs to the three-finger toxin family. Short-chain subfamily. Expressed by the venom gland.

It localises to the secreted. Functionally, this three-finger toxin binds and inhibits the nicotinic acetylcholine receptor (nAChR). The polypeptide is Short neurotoxin OH-46 (Ophiophagus hannah (King cobra)).